Consider the following 199-residue polypeptide: Protein-L-isoaspartate O-methyltransferase (199 aa).

Ser51 is an active-site residue.

Belongs to the methyltransferase superfamily. L-isoaspartyl/D-aspartyl protein methyltransferase family.

Its subcellular location is the cytoplasm. The enzyme catalyses [protein]-L-isoaspartate + S-adenosyl-L-methionine = [protein]-L-isoaspartate alpha-methyl ester + S-adenosyl-L-homocysteine. Its function is as follows. Catalyzes the methyl esterification of L-isoaspartyl residues in peptides and proteins that result from spontaneous decomposition of normal L-aspartyl and L-asparaginyl residues. It plays a role in the repair and/or degradation of damaged proteins. The sequence is that of Protein-L-isoaspartate O-methyltransferase from Fervidobacterium nodosum (strain ATCC 35602 / DSM 5306 / Rt17-B1).